Reading from the N-terminus, the 280-residue chain is Phosphatidylglycerol--prolipoprotein diacylglyceryl transferase (280 aa).

The next 4 helical transmembrane spans lie at 26 to 46 (LAIH…WFYA), 71 to 91 (FILW…ILFY), 106 to 126 (IWNG…AMIL), and 132 to 152 (GIPV…GLLF). Arg-154 contacts a 1,2-diacyl-sn-glycero-3-phospho-(1'-sn-glycerol). 3 consecutive transmembrane segments (helical) span residues 193–213 (GLEG…FKAL), 217–237 (GTVT…VEFF), and 251–271 (WLTM…WAVL).

Belongs to the Lgt family.

It is found in the cell inner membrane. It catalyses the reaction L-cysteinyl-[prolipoprotein] + a 1,2-diacyl-sn-glycero-3-phospho-(1'-sn-glycerol) = an S-1,2-diacyl-sn-glyceryl-L-cysteinyl-[prolipoprotein] + sn-glycerol 1-phosphate + H(+). It functions in the pathway protein modification; lipoprotein biosynthesis (diacylglyceryl transfer). In terms of biological role, catalyzes the transfer of the diacylglyceryl group from phosphatidylglycerol to the sulfhydryl group of the N-terminal cysteine of a prolipoprotein, the first step in the formation of mature lipoproteins. In Agrobacterium fabrum (strain C58 / ATCC 33970) (Agrobacterium tumefaciens (strain C58)), this protein is Phosphatidylglycerol--prolipoprotein diacylglyceryl transferase.